A 331-amino-acid chain; its full sequence is Protein RecA (331 aa).

Residue 61–68 (GPESSGKT) participates in ATP binding.

This sequence belongs to the RecA family.

Its subcellular location is the cytoplasm. In terms of biological role, can catalyze the hydrolysis of ATP in the presence of single-stranded DNA, the ATP-dependent uptake of single-stranded DNA by duplex DNA, and the ATP-dependent hybridization of homologous single-stranded DNAs. It interacts with LexA causing its activation and leading to its autocatalytic cleavage. This chain is Protein RecA, found in Mycoplasma mobile (strain ATCC 43663 / 163K / NCTC 11711) (Mesomycoplasma mobile).